Reading from the N-terminus, the 127-residue chain is Protein ApaG (127 aa).

In terms of domain architecture, ApaG spans 3–127 (DDPRYRVEVE…FVLSVPRTLH (125 aa)).

The sequence is that of Protein ApaG from Xanthomonas euvesicatoria pv. vesicatoria (strain 85-10) (Xanthomonas campestris pv. vesicatoria).